We begin with the raw amino-acid sequence, 259 residues long: Glucosamine-6-phosphate deaminase (259 aa).

Asp-66 (proton acceptor; for enolization step) is an active-site residue. Asp-135 serves as the catalytic For ring-opening step. The Proton acceptor; for ring-opening step role is filled by His-137. Glu-142 (for ring-opening step) is an active-site residue.

The protein belongs to the glucosamine/galactosamine-6-phosphate isomerase family. NagB subfamily.

It catalyses the reaction alpha-D-glucosamine 6-phosphate + H2O = beta-D-fructose 6-phosphate + NH4(+). The protein operates within amino-sugar metabolism; N-acetylneuraminate degradation; D-fructose 6-phosphate from N-acetylneuraminate: step 5/5. In terms of biological role, catalyzes the reversible isomerization-deamination of glucosamine 6-phosphate (GlcN6P) to form fructose 6-phosphate (Fru6P) and ammonium ion. The sequence is that of Glucosamine-6-phosphate deaminase from Rhodococcus jostii (strain RHA1).